Consider the following 353-residue polypeptide: uncharacterized protein (353 aa).

Mn(2+)-binding residues include Asp-212, Asp-223, His-287, Glu-316, and Glu-330.

Belongs to the peptidase M24B family. Mn(2+) is required as a cofactor.

This is an uncharacterized protein from Bacillus subtilis (strain 168).